Here is a 588-residue protein sequence, read N- to C-terminus: Zeta-carotene desaturase, chloroplastic/chromoplastic (588 aa).

The N-terminal 49 residues, 1–49 (MATCSAYLCCPATSASLKKRVFPDGSAGFLFFGGRRLSNRLVTPKSVIR), are a transit peptide targeting the chloroplast and chromoplast.

The protein belongs to the zeta carotene desaturase family. In terms of assembly, monomer and dimer. Requires decylplastoquinone as cofactor. 6-decylubiquinone is required as a cofactor.

The protein resides in the plastid. The protein localises to the chloroplast. Its subcellular location is the chromoplast. The catalysed reaction is 9,9'-di-cis-zeta-carotene + 2 a quinone = 7,7',9,9'-tetra-cis-lycopene + 2 a quinol. It participates in carotenoid biosynthesis; lycopene biosynthesis. Functionally, catalyzes the conversion of zeta-carotene to lycopene via the intermediary of neurosporene. It carries out two consecutive desaturations (introduction of double bonds) at positions C-7 and C-7'. Shows stereoselectivity toward trans C15-C15'zeta-carotene double bond. The zeta-carotene produced by the phytoene desaturase PDS has a C15-C15' double bond in the cis configuration and it requires isomerization before being recognized as substrate by ZDS. No activity with all-trans-zeta-carotene. The main product is 7,9,7',9'-tetra-cis-lycopene (pro-lycopene). This is Zeta-carotene desaturase, chloroplastic/chromoplastic (ZDS) from Capsicum annuum (Capsicum pepper).